The following is a 731-amino-acid chain: 1,4-alpha-glucan branching enzyme GlgB (731 aa).

The Nucleophile role is filled by Asp411. Residue Glu464 is the Proton donor of the active site.

The protein belongs to the glycosyl hydrolase 13 family. GlgB subfamily. In terms of assembly, monomer.

It catalyses the reaction Transfers a segment of a (1-&gt;4)-alpha-D-glucan chain to a primary hydroxy group in a similar glucan chain.. The protein operates within glycan biosynthesis; glycogen biosynthesis. Functionally, catalyzes the formation of the alpha-1,6-glucosidic linkages in glycogen by scission of a 1,4-alpha-linked oligosaccharide from growing alpha-1,4-glucan chains and the subsequent attachment of the oligosaccharide to the alpha-1,6 position. The chain is 1,4-alpha-glucan branching enzyme GlgB from Mycobacterium bovis (strain ATCC BAA-935 / AF2122/97).